The primary structure comprises 188 residues: UPF0301 protein XC_1365 (188 aa).

This sequence belongs to the UPF0301 (AlgH) family.

This chain is UPF0301 protein XC_1365, found in Xanthomonas campestris pv. campestris (strain 8004).